The following is a 100-amino-acid chain: Tachykinin-4 (100 aa).

An N-terminal signal peptide occupies residues 1–19 (MPSSVTLLLLMGLSVCTSA). Propeptides lie at residues 20–55 (EDGG…LQEV) and 85–100 (RASS…QGAE). Positions 80–100 (GLLGRRASSTKGSVDEDQGAE) are disordered.

Belongs to the tachykinin family.

It is found in the secreted. Functionally, tachykinins are active peptides which excite neurons, evoke behavioral responses, are potent vasodilators and secretagogues, and contract (directly or indirectly) many smooth muscles. The protein is Tachykinin-4 of Oryctolagus cuniculus (Rabbit).